A 379-amino-acid chain; its full sequence is Glutamate 5-kinase (379 aa).

An ATP-binding site is contributed by lysine 8. Residues serine 49, aspartate 136, and asparagine 148 each coordinate substrate. Residues 168–169 (TD) and 211–217 (TGGMATK) contribute to the ATP site. The region spanning 276-354 (MGKIYLDAGA…ERIASLLGYM (79 aa)) is the PUA domain.

It belongs to the glutamate 5-kinase family.

The protein localises to the cytoplasm. The catalysed reaction is L-glutamate + ATP = L-glutamyl 5-phosphate + ADP. It participates in amino-acid biosynthesis; L-proline biosynthesis; L-glutamate 5-semialdehyde from L-glutamate: step 1/2. Catalyzes the transfer of a phosphate group to glutamate to form L-glutamate 5-phosphate. The sequence is that of Glutamate 5-kinase from Microcystis aeruginosa (strain NIES-843 / IAM M-2473).